The following is a 427-amino-acid chain: Cholecystokinin receptor type A (427 aa).

Residues 1 to 41 (MDAVASLLGNASGIPPPCELGLDNETLFCLDQPPPSKEWQP) are Extracellular-facing. N-linked (GlcNAc...) asparagine glycosylation is found at Asn10 and Asn24. Cys18 and Cys29 form a disulfide bridge. Residues 42-67 (AVQILLYSLIFLLSVLGNTLVITVLI) form a helical membrane-spanning segment. Residues 68-77 (RNKRMRTVTN) lie on the Cytoplasmic side of the membrane. A helical membrane pass occupies residues 78–104 (IFLLSLAISDLMLCLFCMPFNLIPNLL). The Extracellular segment spans residues 105–115 (KDFIFGSALCK). A disulfide bridge connects residues Cys114 and Cys196. The helical transmembrane segment at 116 to 137 (TTTYLMGTSVSVSTLNLVAISL) threads the bilayer. The Cytoplasmic portion of the chain corresponds to 138–157 (ERYGAICKPLQSRVWQTKSH). The chain crosses the membrane as a helical span at residues 158–178 (ALKVIAATWCLSFAIMTPYPI). Over 179 to 210 (YSNLVPFTKTNNQTANMCRFLLPSDVMQQAWH) the chain is Extracellular. Asn190 carries N-linked (GlcNAc...) asparagine glycosylation. A helical transmembrane segment spans residues 211–234 (TFLLLILFLIPGIVMMVAYGMISL). The Cytoplasmic portion of the chain corresponds to 235–312 (ELYQGIKFDA…TLMAKKRVIR (78 aa)). Residues 313-333 (MLMVIVVLFFLCWMPIFSANA) form a helical membrane-spanning segment. Topologically, residues 334–348 (WRAYDTVSAERRLSG) are extracellular. Residues 349-372 (TPISFILLLSYTSSCVNPIIYCFM) traverse the membrane as a helical segment. At 373-427 (NRRFRLGFMATFPCCPNPGPPGPRAEAGEEEEGRTTRASLSRYSYSHMSASAPPS) the chain is on the cytoplasmic side. Cys386 carries the S-palmitoyl cysteine lipid modification. The disordered stretch occupies residues 391 to 427 (GPPGPRAEAGEEEEGRTTRASLSRYSYSHMSASAPPS). Polar residues predominate over residues 411–421 (SLSRYSYSHMS).

Belongs to the G-protein coupled receptor 1 family.

The protein localises to the cell membrane. Its function is as follows. Receptor for cholecystokinin. Mediates pancreatic growth and enzyme secretion, smooth muscle contraction of the gall bladder and stomach. Has a 1000-fold higher affinity for CCK rather than for gastrin. It modulates feeding and dopamine-induced behavior in the central and peripheral nervous system. This receptor mediates its action by association with G proteins that activate a phosphatidylinositol-calcium second messenger system. This chain is Cholecystokinin receptor type A (CCKAR), found in Oryctolagus cuniculus (Rabbit).